A 266-amino-acid chain; its full sequence is MQTDNTKSNTNKTAKQEWGSFVFVICIALLIRILIMEPFTVPTGSMKATILENDYIFSTKYSYGYSNYSLSFFDFIPLFKGRIFAREPERGDIVVFRPPHDMSVRYIKRLIGLPGDKIQLIDDVIYINDKKIERTEVGTYISEEGIKYLKFKETLPNGRTYFSYKLAPIYGVIYNDRYGNTDVFYVPEGKYFFLGDNRDQSNDSRVNLGFVPFENFIAKAQFIWFSTKITWWDNDIGVINLVLKLKPWIESVRLNRIFRNLYNTDV.

Topologically, residues 1–20 (MQTDNTKSNTNKTAKQEWGS) are cytoplasmic. The chain crosses the membrane as a helical span at residues 21–41 (FVFVICIALLIRILIMEPFTV). The Periplasmic segment spans residues 42–266 (PTGSMKATIL…IFRNLYNTDV (225 aa)). Catalysis depends on residues Ser-45 and Lys-108.

Belongs to the peptidase S26 family.

It is found in the cell inner membrane. It carries out the reaction Cleavage of hydrophobic, N-terminal signal or leader sequences from secreted and periplasmic proteins.. In Rickettsia massiliae (strain Mtu5), this protein is Signal peptidase I (lepB).